The primary structure comprises 203 residues: CASP-like protein 2U6 (203 aa).

At 1–31 the chain is on the cytoplasmic side; that stretch reads MSEHRIPVAADKKISPPISAGEQKGCKGLKR. A helical transmembrane segment spans residues 32–52; the sequence is TDLMLRFAAFVCCTVTMVVLI. Topologically, residues 53 to 84 are extracellular; that stretch reads TDKQTSAIQVPGFNNLTITKTVSFDLAKAFVY. The N-linked (GlcNAc...) asparagine glycan is linked to N67. Residues 85 to 105 form a helical membrane-spanning segment; the sequence is LVSAAGIGAGYTLLVLVLSII. Residues 106-111 are Cytoplasmic-facing; sequence SAERSK. A helical transmembrane segment spans residues 112–132; that stretch reads AIAWFIFVFDQLITYVLLAAA. At 133–164 the chain is on the extracellular side; the sequence is AASTEVAYMGAHAPPEASWLKVCSLFGRFCHQ. The helical transmembrane segment at 165–185 threads the bilayer; sequence LGASLVTSLISTVLFAFSAAI. Topologically, residues 186 to 203 are cytoplasmic; the sequence is SAYYLFSNTNVRPAYSKG.

Belongs to the Casparian strip membrane proteins (CASP) family. Homodimer and heterodimers.

The protein localises to the cell membrane. This Selaginella moellendorffii (Spikemoss) protein is CASP-like protein 2U6.